The following is a 152-amino-acid chain: Cytochrome c oxidase subunit 5A, mitochondrial (152 aa).

A mitochondrion-targeting transit peptide spans 1 to 43; the sequence is MLGTALRRCAVAAAAASRAGPRGLLHPAPAPGPAAAIQSIRCY. Residues 2–22 carry the SIFI-degron motif; it reads LGTALRRCAVAAAAASRAGPR. N6-acetyllysine occurs at positions 89 and 115. Residue Thr143 is modified to Phosphothreonine.

It belongs to the cytochrome c oxidase subunit 5A family. As to quaternary structure, component of the cytochrome c oxidase (complex IV, CIV), a multisubunit enzyme composed of 14 subunits. The complex is composed of a catalytic core of 3 subunits MT-CO1, MT-CO2 and MT-CO3, encoded in the mitochondrial DNA, and 11 supernumerary subunits COX4I, COX5A, COX5B, COX6A, COX6B, COX6C, COX7A, COX7B, COX7C, COX8 and NDUFA4, which are encoded in the nuclear genome. The complex exists as a monomer or a dimer and forms supercomplexes (SCs) in the inner mitochondrial membrane with NADH-ubiquinone oxidoreductase (complex I, CI) and ubiquinol-cytochrome c oxidoreductase (cytochrome b-c1 complex, complex III, CIII), resulting in different assemblies (supercomplex SCI(1)III(2)IV(1) and megacomplex MCI(2)III(2)IV(2)). Interacts with AFG1L. Interacts with RAB5IF. In response to mitochondrial stress, the precursor protein is ubiquitinated by the SIFI complex in the cytoplasm before mitochondrial import, leading to its degradation. Within the SIFI complex, UBR4 initiates ubiquitin chain that are further elongated or branched by KCMF1.

Its subcellular location is the mitochondrion inner membrane. Its pathway is energy metabolism; oxidative phosphorylation. In terms of biological role, component of the cytochrome c oxidase, the last enzyme in the mitochondrial electron transport chain which drives oxidative phosphorylation. The respiratory chain contains 3 multisubunit complexes succinate dehydrogenase (complex II, CII), ubiquinol-cytochrome c oxidoreductase (cytochrome b-c1 complex, complex III, CIII) and cytochrome c oxidase (complex IV, CIV), that cooperate to transfer electrons derived from NADH and succinate to molecular oxygen, creating an electrochemical gradient over the inner membrane that drives transmembrane transport and the ATP synthase. Cytochrome c oxidase is the component of the respiratory chain that catalyzes the reduction of oxygen to water. Electrons originating from reduced cytochrome c in the intermembrane space (IMS) are transferred via the dinuclear copper A center (CU(A)) of subunit 2 and heme A of subunit 1 to the active site in subunit 1, a binuclear center (BNC) formed by heme A3 and copper B (CU(B)). The BNC reduces molecular oxygen to 2 water molecules using 4 electrons from cytochrome c in the IMS and 4 protons from the mitochondrial matrix. The sequence is that of Cytochrome c oxidase subunit 5A, mitochondrial (COX5A) from Eulemur fulvus fulvus (Brown lemur).